The primary structure comprises 446 residues: tRNA-2-methylthio-N(6)-dimethylallyladenosine synthase (446 aa).

The MTTase N-terminal domain occupies 8-124 (KTYRVKSFGC…LPGMIDAAVA (117 aa)). The [4Fe-4S] cluster site is built by Cys-17, Cys-53, Cys-87, Cys-160, Cys-164, and Cys-167. Residues 146-378 (RKSAPSAFLT…QAALNRDQAA (233 aa)) enclose the Radical SAM core domain. The 62-residue stretch at 381–442 (AGSVGRTCEV…PNSLAGQLLE (62 aa)) folds into the TRAM domain.

It belongs to the methylthiotransferase family. MiaB subfamily. Monomer. Requires [4Fe-4S] cluster as cofactor.

The protein localises to the cytoplasm. It catalyses the reaction N(6)-dimethylallyladenosine(37) in tRNA + (sulfur carrier)-SH + AH2 + 2 S-adenosyl-L-methionine = 2-methylsulfanyl-N(6)-dimethylallyladenosine(37) in tRNA + (sulfur carrier)-H + 5'-deoxyadenosine + L-methionine + A + S-adenosyl-L-homocysteine + 2 H(+). Its function is as follows. Catalyzes the methylthiolation of N6-(dimethylallyl)adenosine (i(6)A), leading to the formation of 2-methylthio-N6-(dimethylallyl)adenosine (ms(2)i(6)A) at position 37 in tRNAs that read codons beginning with uridine. This is tRNA-2-methylthio-N(6)-dimethylallyladenosine synthase from Erythrobacter litoralis (strain HTCC2594).